Reading from the N-terminus, the 85-residue chain is Neurotoxin beta-KTx 14.3 (85 aa).

The N-terminal stretch at M1–A20 is a signal peptide. Positions G21–G37 are excised as a propeptide. The region spanning E49–K85 is the BetaSPN-type CS-alpha/beta domain. Intrachain disulfides connect C52–C72, C59–C77, and C63–C79.

It belongs to the long chain scorpion toxin family. Class 2 subfamily. As to expression, expressed by the venom gland.

Its subcellular location is the secreted. Its function is as follows. Toxin with activity on voltage-gated potassium channels. Moderately and reversibly blocks up to 50% of the activity of Kv7.1/KCNQ1 (tested at 22 uM). 3D-structure modeling of the KCNQ1-toxin complex shows that the toxin interacts with the channel pore domain. Additionally, shows a very weak effect to block voltage-gated potassium channel Kv1.1/KCNA1. In terms of biological role, has a very weak effect to block voltage-gated potassium channel Kv1.1/KCNA1. The polypeptide is Neurotoxin beta-KTx 14.3 (Lychas mucronatus (Chinese swimming scorpion)).